We begin with the raw amino-acid sequence, 1215 residues long: Reverse gyrase 2 (1215 aa).

An RG N-terminal-type zinc finger spans residues 3–44 (GGVNAVYMGLCYNCGGNIDEDRLEKGLPCARCLPSPPRRATP). The Zn(2+) site is built by Cys13, Cys16, Cys31, and Cys34. ATP-binding positions include Gln89 and 106 to 113 (APTGVGKS). Positions 93–249 (AKRLVKGDSF…SLVKARLKLY (157 aa)) constitute a Helicase ATP-binding domain. Residues 209–212 (DDVD) carry the DEAD box motif. The segment at 614-1215 (VRVKTTLLVV…TGDVMGQSEA (602 aa)) is topoisomerase I. Residues 618 to 783 (TTLLVVESPT…NVRRGRFHEV (166 aa)) enclose the Toprim domain. Glu624 is a binding site for Mg(2+). The RG C-terminal-type zinc-finger motif lies at 702–729 (IKRCLDCGAQHTSSSPFCPRCGSPRQVD). Zn(2+)-binding residues include Cys705, Cys708, Cys719, and Cys722. Asp752 contributes to the Mg(2+) binding site. One can recognise a Topo IA-type catalytic domain in the interval 799 to 1200 (EKSLIEAQKV…SVWRMVDEAV (402 aa)). The O-(5'-phospho-DNA)-tyrosine intermediate role is filled by Tyr943.

In the N-terminal section; belongs to the DEAD box helicase family. DDVD subfamily. The protein in the C-terminal section; belongs to the type IA topoisomerase family. Monomer. Zn(2+) serves as cofactor. The cofactor is Mg(2+).

The protein localises to the cytoplasm. The enzyme catalyses ATP + H2O = ADP + phosphate + H(+). Modifies the topological state of DNA by introducing positive supercoils in an ATP-dependent process, increasing the linking number in steps of +1. Binds to single-stranded DNA, transiently cleaves and then rejoins the ends, introducing a positive supercoil in the process. The scissile phosphodiester is attacked by the catalytic tyrosine of the enzyme, resulting in the formation of a DNA-(5'-phosphotyrosyl)-enzyme intermediate. Probably involved in rewinding DNA strands in regions of the chromosome that have opened up to allow replication, transcription, DNA repair and/or for DNA protection. The protein is Reverse gyrase 2 of Aeropyrum pernix (strain ATCC 700893 / DSM 11879 / JCM 9820 / NBRC 100138 / K1).